The following is a 178-amino-acid chain: MKVNPPLAWHPAPVSAPVDLHWWLTHRGSLTRLIQDRCEHFRVEPIFQALATACIDELEVMNLRRQTRALVREVYLRCNETPVVFAHSIVRKEHLRGAWRGLSRLGNQSLGTMLFTNPLIQRTPLAFKKLKPHHPLFERACKRLQNRPADLWARRSLFILQHQPILVTEVFLPAIRRL.

Residues arginine 72, leucine 110, and glutamate 169 each contribute to the substrate site.

This sequence belongs to the UbiC family.

The protein resides in the cytoplasm. It carries out the reaction chorismate = 4-hydroxybenzoate + pyruvate. It functions in the pathway cofactor biosynthesis; ubiquinone biosynthesis. Its function is as follows. Removes the pyruvyl group from chorismate, with concomitant aromatization of the ring, to provide 4-hydroxybenzoate (4HB) for the ubiquinone pathway. The protein is Probable chorismate pyruvate-lyase of Nitrosomonas europaea (strain ATCC 19718 / CIP 103999 / KCTC 2705 / NBRC 14298).